The primary structure comprises 831 residues: Probable basic-leucine zipper transcription factor P (831 aa).

2 disordered regions span residues 1–33 (MNHR…PSII) and 54–166 (NITS…IASR). Residues 54 to 85 (NITSSPSTSSSPPISTTTTTTTTTTTTATAKK) are compositionally biased toward low complexity. The segment covering 87-96 (NSKEKKKTTN) has biased composition (basic and acidic residues). Residues 97-129 (KDNNNNNNNNNSNNQQQQQQQQQQQQQQQQQQQ) are compositionally biased toward low complexity. Positions 101–141 (NNNNNNNSNNQQQQQQQQQQQQQQQQQQQYEEEDDDEEDEG) form a coiled coil. A compositionally biased stretch (acidic residues) spans 130–143 (YEEEDDDEEDEGGD). Residues 144–154 (DNTKVGKGEKM) are compositionally biased toward basic and acidic residues. One can recognise a bZIP domain in the interval 151 to 214 (GEKMKARRTN…LELLKFSQEV (64 aa)). Positions 153–173 (KMKARRTNQNIASRNYRQRKK) are basic motif. A leucine-zipper region spans residues 176 to 183 (IKEMEDKI). Low complexity-rich tracts occupy residues 469–484 (SSSS…SSTS) and 497–510 (SSSN…SASS). Disordered regions lie at residues 469 to 510 (SSSS…SASS), 658 to 697 (QQQA…HQNY), 715 to 771 (DATN…NTNK), and 787 to 810 (SLFS…QNDS). Residues 601-664 (AQQHAQQQAQ…QAAQQQAAQQ (64 aa)) adopt a coiled-coil conformation. Composition is skewed to low complexity over residues 674–695 (PPQH…QQHQ), 720–750 (NNNN…NNNN), and 787–800 (SLFS…NSQS).

Belongs to the bZIP family.

It is found in the nucleus. Probable transcriptional regulator. This chain is Probable basic-leucine zipper transcription factor P (bzpP), found in Dictyostelium discoideum (Social amoeba).